The primary structure comprises 774 residues: Lysyl oxidase homolog 2 (774 aa).

The N-terminal stretch at 1–25 (MERRGSSCLCRCLALLALLPTLSLA) is a signal peptide. SRCR domains lie at 58–159 (LRLA…VVCS), 188–302 (IRAI…VSCV), 326–425 (VRLR…VRCN), and 435–544 (LRLN…VACS). 9 cysteine pairs are disulfide-bonded: C84–C148, C97–C158, C128–C138, C218–C291, C231–C301, C265–C275, C351–C414, C364–C424, and C395–C405. N288 carries N-linked (GlcNAc...) asparagine glycosylation. N455 carries an N-linked (GlcNAc...) asparagine glycan. Cystine bridges form between C464–C530, C477–C543, and C511–C521. A lysyl-oxidase like region spans residues 548–751 (PDLVLNAEIV…WMYNCHIGGS (204 aa)). 2 residues coordinate Ca(2+): D549 and L550. 4 disulfides stabilise this stretch: C573/C625, C579/C695, C657/C673, and C663/C685. Cu cation is bound by residues H626, H628, and H630. N-linked (GlcNAc...) asparagine glycosylation is present at N644. Residues 653–689 (KASFCLEDTECEGDIQKSYECANFGEQGITMGCWDMY) constitute a cross-link (lysine tyrosylquinone (Lys-Tyr)). Residue Y689 is modified to 2',4',5'-topaquinone. Ca(2+)-binding residues include E722, D724, N727, and N728. C732 and C746 are disulfide-bonded.

The protein belongs to the lysyl oxidase family. In terms of assembly, component of some chromatin repressor complex. Interacts with SNAI1. Interacts with TAF10. Interacts with HSPA5. Interacts with EFEMP2. Cu cation serves as cofactor. It depends on lysine tyrosylquinone residue as a cofactor. In terms of processing, the lysine tyrosylquinone cross-link (LTQ) is generated by condensation of the epsilon-amino group of a lysine with a topaquinone produced by oxidation of tyrosine. N-glycosylated. N-glycosylation on Asn-455 and Asn-644 may be essential for proper folding and secretion; may be composed of a fucosylated carbohydrates attached to a trimannose N-linked glycan core.

Its subcellular location is the secreted. The protein resides in the extracellular space. It is found in the extracellular matrix. It localises to the basement membrane. The protein localises to the nucleus. Its subcellular location is the chromosome. The protein resides in the endoplasmic reticulum. The enzyme catalyses L-lysyl-[protein] + O2 + H2O = (S)-2-amino-6-oxohexanoyl-[protein] + H2O2 + NH4(+). Specifically inhibited by a mouse monoclonal antibody AB0023, inhibition occurs in a non-competitive manner. Mediates the post-translational oxidative deamination of lysine residues on target proteins leading to the formation of deaminated lysine (allysine). Acts as a transcription corepressor and specifically mediates deamination of trimethylated 'Lys-4' of histone H3 (H3K4me3), a specific tag for epigenetic transcriptional activation. Shows no activity against histone H3 when it is trimethylated on 'Lys-9' (H3K9me3) or 'Lys-27' (H3K27me3) or when 'Lys-4' is monomethylated (H3K4me1) or dimethylated (H3K4me2). Also mediates deamination of methylated TAF10, a member of the transcription factor IID (TFIID) complex, which induces release of TAF10 from promoters, leading to inhibition of TFIID-dependent transcription. LOXL2-mediated deamination of TAF10 results in transcriptional repression of genes required for embryonic stem cell pluripotency including POU5F1/OCT4, NANOG, KLF4 and SOX2. Involved in epithelial to mesenchymal transition (EMT) via interaction with SNAI1 and participates in repression of E-cadherin CDH1, probably by mediating deamination of histone H3. During EMT, involved with SNAI1 in negatively regulating pericentromeric heterochromatin transcription. SNAI1 recruits LOXL2 to pericentromeric regions to oxidize histone H3 and repress transcription which leads to release of heterochromatin component CBX5/HP1A, enabling chromatin reorganization and acquisition of mesenchymal traits. Interacts with the endoplasmic reticulum protein HSPA5 which activates the IRE1-XBP1 pathway of the unfolded protein response, leading to expression of several transcription factors involved in EMT and subsequent EMT induction. When secreted into the extracellular matrix, promotes cross-linking of extracellular matrix proteins by mediating oxidative deamination of peptidyl lysine residues in precursors to fibrous collagen and elastin. Acts as a regulator of sprouting angiogenesis, probably via collagen IV scaffolding. Acts as a regulator of chondrocyte differentiation, probably by regulating expression of factors that control chondrocyte differentiation. This chain is Lysyl oxidase homolog 2 (LOXL2), found in Bos taurus (Bovine).